Reading from the N-terminus, the 98-residue chain is Large ribosomal subunit protein uL23c (98 aa).

Belongs to the universal ribosomal protein uL23 family. As to quaternary structure, part of the 50S ribosomal subunit.

The protein localises to the plastid. It is found in the chloroplast. Functionally, binds to 23S rRNA. The polypeptide is Large ribosomal subunit protein uL23c (rpl23) (Thalassiosira pseudonana (Marine diatom)).